Consider the following 404-residue polypeptide: CinA-like protein (404 aa).

This sequence belongs to the CinA family.

The chain is CinA-like protein from Deinococcus radiodurans (strain ATCC 13939 / DSM 20539 / JCM 16871 / CCUG 27074 / LMG 4051 / NBRC 15346 / NCIMB 9279 / VKM B-1422 / R1).